The primary structure comprises 216 residues: Cytochrome c oxidase subunit 2 (216 aa).

The Mitochondrial intermembrane portion of the chain corresponds to 1 to 8 (LGLQNATS). Residues 9–39 (PIMEELIAFHDHALMIIFLISSLVLYIISLM) form a helical membrane-spanning segment. At 40 to 53 (LTTKLTHTSTMNAQ) the chain is on the mitochondrial matrix side. A helical transmembrane segment spans residues 54–81 (EIEMIWTILPAVILIMIALPSLRILYMT). Residues 82–216 (DEFNKPYLTL…FIYFQDFEVW (135 aa)) are Mitochondrial intermembrane-facing. Cu cation is bound by residues His-155, Cys-190, Glu-192, Cys-194, His-198, and Met-201. Glu-192 contributes to the Mg(2+) binding site.

The protein belongs to the cytochrome c oxidase subunit 2 family. In terms of assembly, component of the cytochrome c oxidase (complex IV, CIV), a multisubunit enzyme composed of 14 subunits. The complex is composed of a catalytic core of 3 subunits MT-CO1, MT-CO2 and MT-CO3, encoded in the mitochondrial DNA, and 11 supernumerary subunits COX4I, COX5A, COX5B, COX6A, COX6B, COX6C, COX7A, COX7B, COX7C, COX8 and NDUFA4, which are encoded in the nuclear genome. The complex exists as a monomer or a dimer and forms supercomplexes (SCs) in the inner mitochondrial membrane with NADH-ubiquinone oxidoreductase (complex I, CI) and ubiquinol-cytochrome c oxidoreductase (cytochrome b-c1 complex, complex III, CIII), resulting in different assemblies (supercomplex SCI(1)III(2)IV(1) and megacomplex MCI(2)III(2)IV(2)). Found in a complex with TMEM177, COA6, COX18, COX20, SCO1 and SCO2. Interacts with TMEM177 in a COX20-dependent manner. Interacts with COX20. Interacts with COX16. The cofactor is Cu cation.

The protein localises to the mitochondrion inner membrane. The catalysed reaction is 4 Fe(II)-[cytochrome c] + O2 + 8 H(+)(in) = 4 Fe(III)-[cytochrome c] + 2 H2O + 4 H(+)(out). In terms of biological role, component of the cytochrome c oxidase, the last enzyme in the mitochondrial electron transport chain which drives oxidative phosphorylation. The respiratory chain contains 3 multisubunit complexes succinate dehydrogenase (complex II, CII), ubiquinol-cytochrome c oxidoreductase (cytochrome b-c1 complex, complex III, CIII) and cytochrome c oxidase (complex IV, CIV), that cooperate to transfer electrons derived from NADH and succinate to molecular oxygen, creating an electrochemical gradient over the inner membrane that drives transmembrane transport and the ATP synthase. Cytochrome c oxidase is the component of the respiratory chain that catalyzes the reduction of oxygen to water. Electrons originating from reduced cytochrome c in the intermembrane space (IMS) are transferred via the dinuclear copper A center (CU(A)) of subunit 2 and heme A of subunit 1 to the active site in subunit 1, a binuclear center (BNC) formed by heme A3 and copper B (CU(B)). The BNC reduces molecular oxygen to 2 water molecules using 4 electrons from cytochrome c in the IMS and 4 protons from the mitochondrial matrix. This chain is Cytochrome c oxidase subunit 2 (MT-CO2), found in Callimico goeldii (Goeldi's marmoset).